The primary structure comprises 509 residues: Bifunctional purine biosynthesis protein PurH (509 aa).

The 144-residue stretch at 1 to 144 folds into the MGS-like domain; the sequence is MKRALISVSD…KNYAAVTVVV (144 aa).

Belongs to the PurH family.

It carries out the reaction (6R)-10-formyltetrahydrofolate + 5-amino-1-(5-phospho-beta-D-ribosyl)imidazole-4-carboxamide = 5-formamido-1-(5-phospho-D-ribosyl)imidazole-4-carboxamide + (6S)-5,6,7,8-tetrahydrofolate. The catalysed reaction is IMP + H2O = 5-formamido-1-(5-phospho-D-ribosyl)imidazole-4-carboxamide. It functions in the pathway purine metabolism; IMP biosynthesis via de novo pathway; 5-formamido-1-(5-phospho-D-ribosyl)imidazole-4-carboxamide from 5-amino-1-(5-phospho-D-ribosyl)imidazole-4-carboxamide (10-formyl THF route): step 1/1. Its pathway is purine metabolism; IMP biosynthesis via de novo pathway; IMP from 5-formamido-1-(5-phospho-D-ribosyl)imidazole-4-carboxamide: step 1/1. In Listeria innocua serovar 6a (strain ATCC BAA-680 / CLIP 11262), this protein is Bifunctional purine biosynthesis protein PurH.